A 1053-amino-acid polypeptide reads, in one-letter code: MFGRSRSWVGGGHGKTSRNIHSLDHLKYLYHVLTKNTTVTEQNRNLLVETIRSITEILIWGDQNDSSVFDFFLEKNMFVFFLNILRQKSGRYVCVQLLQTLNILFENISHETSLYYLLSNNYVNSIIVHKFDFSDEEIMAYYISFLKTLSLKLNNHTVHFFYNEHTNDFALYTEAIKFFNHPESMVRIAVRTITLNVYKVSLDNQAMLHYIRDKTAVPYFSNLVWFIGSHVIELDDCVQTDEEHRNRGKLSDLVAEHLDHLHYLNDILIINCEFLNDVLTDHLLNRLFLPLYVYSLENQDKGGERPKISLPVSLYLLSQVFLIIHHAPLVNSLAEVILNGDLSEMYAKTEQDIQRSSAKPSIRCFIKPTETLERSLEMNKHKGKRRVQKRPNYKNVGEEEDEEKGPTEDAQEDAEKAKGTEGGSKGIKTSGESEEIEMVIMERSKLSELAASTSVQEQNTTDEEKSAAATCSESTQWSRPFLDMVYHALDSPDDDYHALFVLCLLYAMSHNKGMDPEKLERIQLPVPNAAEKTTYNHPLAERLIRIMNNAAQPDGKIRLATLELSCLLLKQQVLMSAGCIMKDVHLACLEGAREESVHLVRHFYKGEDIFLDMFEDEYRSMTMKPMNVEYLMMDASILLPPTGTPLTGIDFVKRLPCGDVEKTRRAIRVFFMLRSLSLQLRGEPETQLPLTREEDLIKTDDVLDLNNSDLIACTVITKDGGMVQRFLAVDIYQMSLVEPDVSRLGWGVVKFAGLLQDMQVTGVEDDSRALNITIHKPASSPHSKPFPILQATFIFSDHIRCIIAKQRLAKGRIQARRMKMQRIAALLDLPIQPTTEVLGFGLGSSTSTQHLPFRFYDQGRRGSSDPTVQRSVFASVDKVPGFAVAQCINQHSSPSLSSQSPPSASGSPSGSGSTSHCDSGGTSSSSTPSTAQSPADAPMSPELPKPHLPDQLVIVNETEADSKPSKNVARSAAVETASLSPSLVPARQPTISLLCEDTADTLSVESLTLVPPVDPHSLRSLTGMPPLSTPAAACTEPVGEEAACAEPVGTAED.

Residues 51-198 (IRSITEILIW…AVRTITLNVY (148 aa)) enclose the FPL domain. Disordered stretches follow at residues 375–434 (SLEM…GESE), 452–471 (STSV…AATC), and 892–983 (SSPS…SPSL). The segment covering 381–392 (HKGKRRVQKRPN) has biased composition (basic residues). Residues 892-938 (SSPSLSSQSPPSASGSPSGSGSTSHCDSGGTSSSSTPSTAQSPADAP) show a composition bias toward low complexity.

The protein belongs to the CLEC16A/gop-1 family. As to quaternary structure, interacts with RNF41/NRDP1. Almost exclusively expressed in immune cells, including dendritic cells, B-lymphocytes and natural killer cells.

It is found in the endosome membrane. Its subcellular location is the lysosome membrane. Regulator of mitophagy through the upstream regulation of the RNF41/NRDP1-PRKN pathway. Mitophagy is a selective form of autophagy necessary for mitochondrial quality control. The RNF41/NRDP1-PRKN pathway regulates autophagosome-lysosome fusion during late mitophagy. May protect RNF41/NRDP1 from proteasomal degradation, RNF41/NRDP1 which regulates proteasomal degradation of PRKN. Plays a key role in beta cells functions by regulating mitophagy/autophagy and mitochondrial health. This is Protein CLEC16A from Homo sapiens (Human).